A 216-amino-acid polypeptide reads, in one-letter code: N-glycosylase/DNA lyase (216 aa).

Gln27, Ser48, and Trp59 together coordinate 8-oxoguanine. The helix-hairpin-helix stretch occupies residues 106 to 170 (EHYYENMVAL…LDYRLKKINP (65 aa)). Lys130 (schiff-base intermediate with DNA) is an active-site residue. 8-oxoguanine-binding residues include Phe134 and Pro160. Asp162 is an active-site residue. 8-oxoguanine-binding residues include Asp190 and Trp194.

The protein belongs to the archaeal N-glycosylase/DNA lyase (AGOG) family.

It carries out the reaction 2'-deoxyribonucleotide-(2'-deoxyribose 5'-phosphate)-2'-deoxyribonucleotide-DNA = a 3'-end 2'-deoxyribonucleotide-(2,3-dehydro-2,3-deoxyribose 5'-phosphate)-DNA + a 5'-end 5'-phospho-2'-deoxyribonucleoside-DNA + H(+). DNA repair enzyme that is part of the base excision repair (BER) pathway; protects from oxidative damage by removing the major product of DNA oxidation, 8-oxoguanine (GO), from single- and double-stranded DNA substrates. The polypeptide is N-glycosylase/DNA lyase (Nanoarchaeum equitans (strain Kin4-M)).